A 544-amino-acid chain; its full sequence is Chaperonin GroEL (544 aa).

ATP is bound by residues 30–33, Lys-51, 87–91, Gly-415, 478–480, and Asp-494; these read TLGP, DGTTT, and NAA.

The protein belongs to the chaperonin (HSP60) family. Forms a cylinder of 14 subunits composed of two heptameric rings stacked back-to-back. Interacts with the co-chaperonin GroES.

Its subcellular location is the cytoplasm. It catalyses the reaction ATP + H2O + a folded polypeptide = ADP + phosphate + an unfolded polypeptide.. In terms of biological role, together with its co-chaperonin GroES, plays an essential role in assisting protein folding. The GroEL-GroES system forms a nano-cage that allows encapsulation of the non-native substrate proteins and provides a physical environment optimized to promote and accelerate protein folding. The polypeptide is Chaperonin GroEL (Geobacter sulfurreducens (strain ATCC 51573 / DSM 12127 / PCA)).